The chain runs to 194 residues: Leucyl/phenylalanyl-tRNA--protein transferase (194 aa).

The protein belongs to the L/F-transferase family.

It localises to the cytoplasm. The catalysed reaction is N-terminal L-lysyl-[protein] + L-leucyl-tRNA(Leu) = N-terminal L-leucyl-L-lysyl-[protein] + tRNA(Leu) + H(+). It carries out the reaction N-terminal L-arginyl-[protein] + L-leucyl-tRNA(Leu) = N-terminal L-leucyl-L-arginyl-[protein] + tRNA(Leu) + H(+). It catalyses the reaction L-phenylalanyl-tRNA(Phe) + an N-terminal L-alpha-aminoacyl-[protein] = an N-terminal L-phenylalanyl-L-alpha-aminoacyl-[protein] + tRNA(Phe). In terms of biological role, functions in the N-end rule pathway of protein degradation where it conjugates Leu, Phe and, less efficiently, Met from aminoacyl-tRNAs to the N-termini of proteins containing an N-terminal arginine or lysine. The sequence is that of Leucyl/phenylalanyl-tRNA--protein transferase from Prosthecochloris aestuarii (strain DSM 271 / SK 413).